The chain runs to 212 residues: NAD(P)H-hydrate epimerase (212 aa).

The 202-residue stretch at 11–212 folds into the YjeF N-terminal domain; that stretch reads MRHYDFYTIN…ANDMGTYAVD (202 aa). A (6S)-NADPHX-binding site is contributed by 60–64; sequence NNGGD. K(+) is bound by residues Asn-61 and Asp-123. Residues 127-133, Tyr-138, and Asp-156 contribute to the (6S)-NADPHX site; that span reads GIGIDRA. A K(+)-binding site is contributed by Ser-159.

This sequence belongs to the NnrE/AIBP family. K(+) is required as a cofactor.

It catalyses the reaction (6R)-NADHX = (6S)-NADHX. It carries out the reaction (6R)-NADPHX = (6S)-NADPHX. Catalyzes the epimerization of the S- and R-forms of NAD(P)HX, a damaged form of NAD(P)H that is a result of enzymatic or heat-dependent hydration. This is a prerequisite for the S-specific NAD(P)H-hydrate dehydratase to allow the repair of both epimers of NAD(P)HX. This Limosilactobacillus reuteri (strain DSM 20016) (Lactobacillus reuteri) protein is NAD(P)H-hydrate epimerase.